The chain runs to 180 residues: Large ribosomal subunit protein uL5 (180 aa).

The protein belongs to the universal ribosomal protein uL5 family. Part of the 50S ribosomal subunit; part of the 5S rRNA/L5/L18/L25 subcomplex. Contacts the 5S rRNA and the P site tRNA. Forms a bridge to the 30S subunit in the 70S ribosome.

This is one of the proteins that bind and probably mediate the attachment of the 5S RNA into the large ribosomal subunit, where it forms part of the central protuberance. In the 70S ribosome it contacts protein S13 of the 30S subunit (bridge B1b), connecting the 2 subunits; this bridge is implicated in subunit movement. Contacts the P site tRNA; the 5S rRNA and some of its associated proteins might help stabilize positioning of ribosome-bound tRNAs. In Streptococcus pneumoniae (strain JJA), this protein is Large ribosomal subunit protein uL5.